A 226-amino-acid polypeptide reads, in one-letter code: RNA annealing protein YRA1 (226 aa).

Residues 1–62 (MSANLDKSLD…PIRKNTRAPP (62 aa)) form a disordered region. The residue at position 2 (Ser2) is an N-acetylserine. Ser8 and Ser100 each carry phosphoserine. Positions 78 to 158 (VKVNVEGLPR…SRLRLNLIVD (81 aa)) constitute an RRM domain. A disordered region spans residues 173–226 (AMPQKGGNAPRPVKRGPNRKAAMAKSQNKPKREKPAKKSLEDLDKEMADYFEKK). The span at 208–226 (AKKSLEDLDKEMADYFEKK) shows a compositional bias: basic and acidic residues.

In terms of assembly, component of the transcription/export (TREX) complex, which is at least is formed of SUB2, TEX1 and YRA1 and the THO complex composed of HPR1, MFT1, THO2 and THP1. Interacts with RDS3 and YRA2.

It is found in the nucleus. RNA-binding RNA annealing protein. May have a role in pre-mRNA metabolism. Component the TREX complex, which operates in coupling transcription elongation to mRNA export. In Saccharomyces cerevisiae (strain ATCC 204508 / S288c) (Baker's yeast), this protein is RNA annealing protein YRA1 (YRA1).